We begin with the raw amino-acid sequence, 310 residues long: 26S proteasome non-ATPase regulatory subunit 14 (310 aa).

The region spanning valine 31–asparagine 166 is the MPN domain. Zn(2+) is bound by residues histidine 113, histidine 115, and aspartate 126. The JAMM motif motif lies at histidine 113–aspartate 126. Phosphoserine is present on residues serine 150 and serine 224. A Phosphothreonine modification is found at threonine 266.

The protein belongs to the peptidase M67A family. PSMD14 subfamily. Component of the 19S proteasome regulatory particle complex. The 26S proteasome consists of a 20S core particle (CP) and two 19S regulatory subunits (RP). The regulatory particle is made of a lid composed of 9 subunits including PSMD4, a base containing 6 ATPases and few additional components. Within the complex, PSMD4 interacts with subunit PSMD7 through their respective MPN domain. Interacts with TXNL1. As to expression, widely expressed. Highest levels in heart and skeletal muscle.

In terms of biological role, component of the 26S proteasome, a multiprotein complex involved in the ATP-dependent degradation of ubiquitinated proteins. This complex plays a key role in the maintenance of protein homeostasis by removing misfolded or damaged proteins, which could impair cellular functions, and by removing proteins whose functions are no longer required. Therefore, the proteasome participates in numerous cellular processes, including cell cycle progression, apoptosis, or DNA damage repair. The PSMD14 subunit is a metalloprotease that specifically cleaves 'Lys-63'-linked polyubiquitin chains within the complex. Plays a role in response to double-strand breaks (DSBs): acts as a regulator of non-homologous end joining (NHEJ) by cleaving 'Lys-63'-linked polyubiquitin, thereby promoting retention of JMJD2A/KDM4A on chromatin and restricting TP53BP1 accumulation. Also involved in homologous recombination repair by promoting RAD51 loading. The protein is 26S proteasome non-ATPase regulatory subunit 14 (PSMD14) of Homo sapiens (Human).